A 492-amino-acid polypeptide reads, in one-letter code: Sestrin-3 (492 aa).

Positions 62 to 243 (LVEEYSTSGR…VCDLANDNSI (182 aa)) are N-terminal domain; may mediate the alkylhydroperoxide reductase activity. Cysteine 121 (cysteine sulfenic acid (-SOH) intermediate) is an active-site residue. The segment at 310–492 (PHSDFEDDVI…ALRAITRHLT (183 aa)) is C-terminal domain; mediates TORC1 regulation. Residues 386–389 (TYNT), threonine 398, and glutamate 463 each bind L-leucine.

It belongs to the sestrin family. Interacts with the GATOR2 complex which is composed of MIOS, SEC13, SEH1L, WDR24 and WDR59; the interaction is not regulated by leucine. Interacts with RRAGA, RRAGB, RRAGC and RRAGD; may function as a guanine nucleotide dissociation inhibitor for RRAGs and regulate them. Interacts with the TORC2 complex; through RICTOR. In terms of tissue distribution, detected in liver and skeletal muscles.

The protein localises to the cytoplasm. It catalyses the reaction a hydroperoxide + L-cysteinyl-[protein] = S-hydroxy-L-cysteinyl-[protein] + an alcohol. May function as an intracellular leucine sensor that negatively regulates the TORC1 signaling pathway. May also regulate the insulin-receptor signaling pathway through activation of TORC2. This metabolic regulator may also play a role in protection against oxidative and genotoxic stresses. May prevent the accumulation of reactive oxygen species (ROS) through the alkylhydroperoxide reductase activity born by the N-terminal domain of the protein. In Mus musculus (Mouse), this protein is Sestrin-3.